We begin with the raw amino-acid sequence, 688 residues long: Alpha-1,4-glucan:maltose-1-phosphate maltosyltransferase (688 aa).

Residues Lys289, Gln349, and Asp384 each coordinate alpha-maltose 1-phosphate. The active-site Nucleophile is the Asp420. Asn421 contributes to the alpha-maltose 1-phosphate binding site. The active-site Proton donor is the Glu449. 560–561 contacts alpha-maltose 1-phosphate; that stretch reads KY.

The protein belongs to the glycosyl hydrolase 13 family. GlgE subfamily. In terms of assembly, homodimer.

The enzyme catalyses alpha-maltose 1-phosphate + [(1-&gt;4)-alpha-D-glucosyl](n) = [(1-&gt;4)-alpha-D-glucosyl](n+2) + phosphate. Its function is as follows. Maltosyltransferase that uses maltose 1-phosphate (M1P) as the sugar donor to elongate linear or branched alpha-(1-&gt;4)-glucans. Is involved in a branched alpha-glucan biosynthetic pathway from trehalose, together with TreS, Mak and GlgB. The chain is Alpha-1,4-glucan:maltose-1-phosphate maltosyltransferase from Rhodospirillum rubrum (strain ATCC 11170 / ATH 1.1.1 / DSM 467 / LMG 4362 / NCIMB 8255 / S1).